The following is a 212-amino-acid chain: ER lumen protein-retaining receptor 1 (212 aa).

The Lumenal segment spans residues 1–4; sequence MNLF. The chain crosses the membrane as a helical span at residues 5-24; the sequence is RFLGDLSHLLAIILLLLKIW. Residues 25–32 are Cytoplasmic-facing; that stretch reads KSRSCAGI. The chain crosses the membrane as a helical span at residues 33 to 52; it reads SGKSQVLFAVVFTARYLDLF. The interval 47-48 is interaction with the K-D-E-L motif on target proteins; it reads RY. Over 53–58 the chain is Lumenal; it reads TNYISL. Residues 59 to 79 traverse the membrane as a helical segment; the sequence is YNTCMKVVYIACSFTTVWMIY. Over 80–92 the chain is Cytoplasmic; sequence SKFKATYDGNHDT. The chain crosses the membrane as a helical span at residues 93-110; that stretch reads FRVEFLVVPTAILAFLVN. The Lumenal portion of the chain corresponds to 111-116; that stretch reads HDFTPL. Residues 117 to 135 form a helical membrane-spanning segment; that stretch reads EILWTFSIYLESVAILPQL. The Cytoplasmic portion of the chain corresponds to 136-149; sequence FMVSKTGEAETITS. A helical membrane pass occupies residues 150-168; the sequence is HYLFALGVYRTLYLFNWIW. The tract at residues 159–169 is interaction with the K-D-E-L motif on target proteins; that stretch reads RTLYLFNWIWR. Over 169–178 the chain is Lumenal; that stretch reads RYHFEGFFDL. The chain crosses the membrane as a helical span at residues 179 to 199; that stretch reads IAIVAGLVQTVLYCDFFYLYI. Residues 200-212 lie on the Cytoplasmic side of the membrane; the sequence is TKVLKGKKLSLPA. Residues 204 to 207 are important for recycling of cargo proteins with the sequence motif K-D-E-L from the Golgi to the endoplasmic reticulum; it reads KGKK. Ser209 carries the phosphoserine; by PKA modification.

It belongs to the ERD2 family. In terms of assembly, upon ligand binding the receptor oligomerizes and interacts with components of the transport machinery such as ARFGAP1 and ARF1. Phosphorylation by PKA at Ser-209 is required for endoplasmic reticulum retention function.

It localises to the golgi apparatus membrane. The protein resides in the cytoplasmic vesicle. The protein localises to the COPI-coated vesicle membrane. It is found in the endoplasmic reticulum membrane. Its subcellular location is the endoplasmic reticulum-Golgi intermediate compartment membrane. Functionally, receptor for the C-terminal sequence motif K-D-E-L that is present on endoplasmic reticulum resident proteins and that mediates their recycling from the Golgi back to the endoplasmic reticulum. In Mus musculus (Mouse), this protein is ER lumen protein-retaining receptor 1 (Kdelr1).